A 167-amino-acid polypeptide reads, in one-letter code: Xanthine-guanine phosphoribosyltransferase (167 aa).

Residues 47-48 (RG), Gln-79, and 102-110 (DDLVDSGKT) contribute to the 5-phospho-alpha-D-ribose 1-diphosphate site. Position 79 (Gln-79) interacts with GMP. Position 103 (Asp-103) interacts with Mg(2+). Asp-106 and Ile-149 together coordinate guanine. The xanthine site is built by Asp-106 and Ile-149. GMP is bound by residues 106–110 (DSGKT) and 148–149 (WI).

This sequence belongs to the purine/pyrimidine phosphoribosyltransferase family. XGPT subfamily. In terms of assembly, homotetramer. Mg(2+) is required as a cofactor.

The protein localises to the cell inner membrane. It carries out the reaction GMP + diphosphate = guanine + 5-phospho-alpha-D-ribose 1-diphosphate. The catalysed reaction is XMP + diphosphate = xanthine + 5-phospho-alpha-D-ribose 1-diphosphate. The enzyme catalyses IMP + diphosphate = hypoxanthine + 5-phospho-alpha-D-ribose 1-diphosphate. The protein operates within purine metabolism; GMP biosynthesis via salvage pathway; GMP from guanine: step 1/1. It participates in purine metabolism; XMP biosynthesis via salvage pathway; XMP from xanthine: step 1/1. Its function is as follows. Purine salvage pathway enzyme that catalyzes the transfer of the ribosyl-5-phosphate group from 5-phospho-alpha-D-ribose 1-diphosphate (PRPP) to the N9 position of the 6-oxopurines guanine and xanthine to form the corresponding ribonucleotides GMP (guanosine 5'-monophosphate) and XMP (xanthosine 5'-monophosphate), with the release of PPi. To a lesser extent, also acts on hypoxanthine. The polypeptide is Xanthine-guanine phosphoribosyltransferase (Cereibacter sphaeroides (strain ATCC 17029 / ATH 2.4.9) (Rhodobacter sphaeroides)).